Consider the following 372-residue polypeptide: 4-hydroxy-3-methylbut-2-en-1-yl diphosphate synthase (flavodoxin) (372 aa).

4 residues coordinate [4Fe-4S] cluster: cysteine 270, cysteine 273, cysteine 305, and glutamate 312.

The protein belongs to the IspG family. [4Fe-4S] cluster serves as cofactor.

The catalysed reaction is (2E)-4-hydroxy-3-methylbut-2-enyl diphosphate + oxidized [flavodoxin] + H2O + 2 H(+) = 2-C-methyl-D-erythritol 2,4-cyclic diphosphate + reduced [flavodoxin]. Its pathway is isoprenoid biosynthesis; isopentenyl diphosphate biosynthesis via DXP pathway; isopentenyl diphosphate from 1-deoxy-D-xylulose 5-phosphate: step 5/6. Functionally, converts 2C-methyl-D-erythritol 2,4-cyclodiphosphate (ME-2,4cPP) into 1-hydroxy-2-methyl-2-(E)-butenyl 4-diphosphate. The sequence is that of 4-hydroxy-3-methylbut-2-en-1-yl diphosphate synthase (flavodoxin) from Citrobacter koseri (strain ATCC BAA-895 / CDC 4225-83 / SGSC4696).